Consider the following 206-residue polypeptide: UPF0301 protein Msil_1255 (206 aa).

This sequence belongs to the UPF0301 (AlgH) family.

This Methylocella silvestris (strain DSM 15510 / CIP 108128 / LMG 27833 / NCIMB 13906 / BL2) protein is UPF0301 protein Msil_1255.